A 267-amino-acid chain; its full sequence is Acetyl-coenzyme A carboxylase carboxyl transferase subunit beta 1 (267 aa).

In terms of domain architecture, CoA carboxyltransferase N-terminal spans Thr9–Gly267. Residues Cys13, Cys16, Cys31, and Cys34 each coordinate Zn(2+). The segment at Cys13–Cys34 adopts a C4-type zinc-finger fold.

It belongs to the AccD/PCCB family. In terms of assembly, acetyl-CoA carboxylase is a heterohexamer composed of biotin carboxyl carrier protein (AccB), biotin carboxylase (AccC) and two subunits each of ACCase subunit alpha (AccA) and ACCase subunit beta (AccD). Zn(2+) serves as cofactor.

It is found in the cytoplasm. It catalyses the reaction N(6)-carboxybiotinyl-L-lysyl-[protein] + acetyl-CoA = N(6)-biotinyl-L-lysyl-[protein] + malonyl-CoA. Its pathway is lipid metabolism; malonyl-CoA biosynthesis; malonyl-CoA from acetyl-CoA: step 1/1. Its function is as follows. Component of the acetyl coenzyme A carboxylase (ACC) complex. Biotin carboxylase (BC) catalyzes the carboxylation of biotin on its carrier protein (BCCP) and then the CO(2) group is transferred by the transcarboxylase to acetyl-CoA to form malonyl-CoA. The sequence is that of Acetyl-coenzyme A carboxylase carboxyl transferase subunit beta 1 from Lactiplantibacillus plantarum (strain ATCC BAA-793 / NCIMB 8826 / WCFS1) (Lactobacillus plantarum).